We begin with the raw amino-acid sequence, 588 residues long: Aspartate--tRNA ligase (588 aa).

Glu-172 contributes to the L-aspartate binding site. The tract at residues 196-199 (QLFK) is aspartate. Arg-218 contributes to the L-aspartate binding site. ATP is bound by residues 218–220 (RDE) and Gln-227. Position 449 (His-449) interacts with L-aspartate. Position 483 (Glu-483) interacts with ATP. Arg-490 provides a ligand contact to L-aspartate. Position 535–538 (535–538 (GLDR)) interacts with ATP.

This sequence belongs to the class-II aminoacyl-tRNA synthetase family. Type 1 subfamily. Homodimer.

It is found in the cytoplasm. It catalyses the reaction tRNA(Asp) + L-aspartate + ATP = L-aspartyl-tRNA(Asp) + AMP + diphosphate. In terms of biological role, catalyzes the attachment of L-aspartate to tRNA(Asp) in a two-step reaction: L-aspartate is first activated by ATP to form Asp-AMP and then transferred to the acceptor end of tRNA(Asp). This chain is Aspartate--tRNA ligase, found in Haemophilus influenzae (strain PittGG).